A 319-amino-acid polypeptide reads, in one-letter code: Aspartate carbamoyltransferase catalytic subunit (319 aa).

Carbamoyl phosphate-binding residues include Arg-59 and Thr-60. Residue Lys-87 participates in L-aspartate binding. Carbamoyl phosphate-binding residues include Arg-109, His-137, and Gln-140. L-aspartate is bound by residues Arg-170 and Arg-224. Carbamoyl phosphate is bound by residues Gly-265 and Pro-266.

This sequence belongs to the aspartate/ornithine carbamoyltransferase superfamily. ATCase family. Heterododecamer (2C3:3R2) of six catalytic PyrB chains organized as two trimers (C3), and six regulatory PyrI chains organized as three dimers (R2).

The enzyme catalyses carbamoyl phosphate + L-aspartate = N-carbamoyl-L-aspartate + phosphate + H(+). Its pathway is pyrimidine metabolism; UMP biosynthesis via de novo pathway; (S)-dihydroorotate from bicarbonate: step 2/3. In terms of biological role, catalyzes the condensation of carbamoyl phosphate and aspartate to form carbamoyl aspartate and inorganic phosphate, the committed step in the de novo pyrimidine nucleotide biosynthesis pathway. In Gemmatimonas aurantiaca (strain DSM 14586 / JCM 11422 / NBRC 100505 / T-27), this protein is Aspartate carbamoyltransferase catalytic subunit.